A 97-amino-acid chain; its full sequence is MNQIELMRTLIAPVVSEKSTAGAEKNRQFVFRVKPAASKLQIKSAVELMFGVKVDSVRILNVKGKSKRFGRFMGQRSDWKKAYVKLKPGFDIELAVN.

This sequence belongs to the universal ribosomal protein uL23 family. As to quaternary structure, part of the 50S ribosomal subunit. Contacts protein L29, and trigger factor when it is bound to the ribosome.

One of the early assembly proteins it binds 23S rRNA. One of the proteins that surrounds the polypeptide exit tunnel on the outside of the ribosome. Forms the main docking site for trigger factor binding to the ribosome. This Methylococcus capsulatus (strain ATCC 33009 / NCIMB 11132 / Bath) protein is Large ribosomal subunit protein uL23.